The primary structure comprises 432 residues: ATP-dependent RNA helicase RhlB (432 aa).

A Q motif motif is present at residues 9–37 (KKFSDFALHPKVIEALEKKGFSNCTQIQA). Residues 40 to 219 (LPITVKGHDI…FEQMNNPEYV (180 aa)) enclose the Helicase ATP-binding domain. 53 to 60 (AQTGTGKT) contacts ATP. The DEAD box signature appears at 165-168 (DEAD). The 146-residue stretch at 245–390 (RLLQTLIEEE…VSKYNSDALL (146 aa)) folds into the Helicase C-terminal domain. Residues 393-432 (LPEPKRRHRPRQGQPRRNNSAPRRGNNTQRNNRNKRPSHS) form a disordered region. Positions 404–423 (QGQPRRNNSAPRRGNNTQRN) are enriched in low complexity.

This sequence belongs to the DEAD box helicase family. RhlB subfamily. In terms of assembly, component of the RNA degradosome, which is a multiprotein complex involved in RNA processing and mRNA degradation.

It localises to the cytoplasm. The catalysed reaction is ATP + H2O = ADP + phosphate + H(+). In terms of biological role, DEAD-box RNA helicase involved in RNA degradation. Has RNA-dependent ATPase activity and unwinds double-stranded RNA. This Proteus mirabilis (strain HI4320) protein is ATP-dependent RNA helicase RhlB.